The primary structure comprises 454 residues: Allantoinase (454 aa).

H58, H60, K149, H189, H245, and D318 together coordinate Zn(2+). N6-carboxylysine is present on K149.

The protein belongs to the metallo-dependent hydrolases superfamily. Allantoinase family. Homotetramer. Requires Zn(2+) as cofactor. Carboxylation allows a single lysine to coordinate two zinc ions.

It catalyses the reaction (S)-allantoin + H2O = allantoate + H(+). Its pathway is nitrogen metabolism; (S)-allantoin degradation; allantoate from (S)-allantoin: step 1/1. Catalyzes the conversion of allantoin (5-ureidohydantoin) to allantoic acid by hydrolytic cleavage of the five-member hydantoin ring. In Enterococcus faecalis (strain ATCC 700802 / V583), this protein is Allantoinase.